The chain runs to 34 residues: MSDINATRLPHPFPLGLQPCAGDVDNLTLTKGEG.

A propeptide spanning residues Met1–Pro10 is cleaved from the precursor. Positions His11–Pro19 form a cross-link, cyclopeptide (His-Pro). The propeptide occupies Cys20–Gly34.

The protein belongs to the MSDIN fungal toxin family. In terms of processing, processed by the macrocyclase-peptidase enzyme POPB to yield a toxic cyclic nonapeptide. POPB first removes 10 residues from the N-terminus. Conformational trapping of the remaining peptide forces the enzyme to release this intermediate rather than proceed to macrocyclization. The enzyme rebinds the remaining peptide in a different conformation and catalyzes macrocyclization of the N-terminal 9 residues.

Probable toxin that belongs to the MSDIN-like toxin family responsible for a large number of food poisoning cases and deaths. The protein is MSDIN-like toxin proprotein 12 of Amanita bisporigera (Destroying angel).